The sequence spans 143 residues: MFMGEYRHNVDEKGRMIIPAKFREELGETFVVTRGLDRCLFVYPQVEWKKLEESLKNLPFTKKDARAFTRFFFSGATECELDKQGRVNIASPLREFAQLKKECVVIGVSNRVEIWSKELWEEYFAESEESFSEIAENIVDFDL.

SpoVT-AbrB domains are found at residues 5 to 47 (EYRH…PQVE) and 76 to 119 (ATEC…SKEL).

Belongs to the MraZ family. Forms oligomers.

The protein localises to the cytoplasm. It is found in the nucleoid. The sequence is that of Transcriptional regulator MraZ from Halalkalibacterium halodurans (strain ATCC BAA-125 / DSM 18197 / FERM 7344 / JCM 9153 / C-125) (Bacillus halodurans).